Here is a 501-residue protein sequence, read N- to C-terminus: Pyruvate kinase 1 (501 aa).

Substrate is bound at residue Arg-50. 4 residues coordinate K(+): Asn-52, Ser-54, Asp-85, and Thr-86. 52–55 (NFSH) lines the ATP pocket. ATP is bound by residues Arg-92 and Lys-178. Glu-243 lines the Mg(2+) pocket. Residues Gly-266, Asp-267, and Thr-299 each contribute to the substrate site. Residue Asp-267 coordinates Mg(2+).

This sequence belongs to the pyruvate kinase family. As to quaternary structure, homotetramer. Mg(2+) serves as cofactor. K(+) is required as a cofactor.

The catalysed reaction is pyruvate + ATP = phosphoenolpyruvate + ADP + H(+). It participates in carbohydrate degradation; glycolysis; pyruvate from D-glyceraldehyde 3-phosphate: step 5/5. The chain is Pyruvate kinase 1 (PYK1) from Candida glabrata (strain ATCC 2001 / BCRC 20586 / JCM 3761 / NBRC 0622 / NRRL Y-65 / CBS 138) (Yeast).